We begin with the raw amino-acid sequence, 601 residues long: Cdc42-interacting protein 4 (601 aa).

The interval 1 to 117 (MDWGTELWDQ…EMKQERKMHF (117 aa)) is required for podosome formation and interaction with AKAP9 and microtubules. The required for translocation to the plasma membrane in response to insulin stretch occupies residues 1 to 117 (MDWGTELWDQ…EMKQERKMHF (117 aa)). Positions 1–264 (MDWGTELWDQ…AANAVDPKND (264 aa)) constitute an F-BAR domain. Positions 67–259 (FSQQQSFVQI…EGMKVAANAV (193 aa)) form a coiled coil. Disordered stretches follow at residues 280 to 358 (GDVE…GRDP), 390 to 420 (DFSH…EVDQ), and 479 to 543 (RGDS…SPIG). Positions 289–302 (QPMNRAPSDSSLGT) are enriched in polar residues. The interaction with CDC42 stretch occupies residues 293 to 537 (RAPSDSSLGT…TEFDEDFEEE (245 aa)). The interaction with PDE6G stretch occupies residues 293–601 (RAPSDSSLGT…PTSYLRVTLN (309 aa)). A phosphoserine mark is found at Ser-296, Ser-298, and Ser-299. Residues 314–329 (GRSRTKRWPFGKKNKP) are compositionally biased toward basic residues. Ser-335 bears the Phosphoserine mark. Over residues 336-346 (PLGGPVPSALP) the composition is skewed to low complexity. Position 351 is a phosphoserine (Ser-351). A coiled-coil region spans residues 388 to 481 (TEDFSHLPPE…ESRVLSNRGD (94 aa)). An REM-1 domain is found at 393–470 (HLPPEQQRKR…VQKYEAWLAE (78 aa)). Positions 407-420 (LEERSRELQKEVDQ) are enriched in basic and acidic residues. The interval 471–601 (AESRVLSNRG…PTSYLRVTLN (131 aa)) is required for interaction with FASLG and localization to lysosomes. Ser-482 bears the Phosphoserine mark. Positions 487 to 541 (ARPPDPPASAPPDSSSNSASQDTKESSEEPPSEESQDTPIYTEFDEDFEEEPTSP) are interaction with DNM2 and WASL. Residues 497-506 (PPDSSSNSAS) show a composition bias toward low complexity. The span at 529 to 538 (EFDEDFEEEP) shows a compositional bias: acidic residues. The interaction with DNM1 and WASL stretch occupies residues 529-601 (EFDEDFEEEP…PTSYLRVTLN (73 aa)). The segment at 538–601 (PTSPIGHCVA…PTSYLRVTLN (64 aa)) is required for podosome formation. Positions 540-601 (SPIGHCVAIY…PTSYLRVTLN (62 aa)) constitute an SH3 domain. Positions 544 to 601 (HCVAIYHFEGSSEGTISMAEGEDLSLMEEDKGDGWTRVRRKEGGEGYVPTSYLRVTLN) are interaction with WAS. The interval 546-601 (VAIYHFEGSSEGTISMAEGEDLSLMEEDKGDGWTRVRRKEGGEGYVPTSYLRVTLN) is interaction with ARHGAP17, DAAM1, DIAPH1 and DIAPH2.

It belongs to the FNBP1 family. In terms of assembly, interacts specifically with GTP-bound RHOQ. Interacts with DNM2 and PDE6G. Homodimerizes, the dimers can polymerize end-to-end to form filamentous structures. Interacts specifically with GTP-bound CDC42. Interacts with AKAP9, ARHGAP17, DAAM1, DIAPH1, DIAPH2, DNM1, FASLG/FASL, GAPVD1, LYN, microtubules, SRC, WAS/WASP and WASL/N-WASP. Interacts with the ligand binding domain of the thyroid receptor (TR) in the presence of thyroid hormone. May interact with CTNNB1 and HD/HTT. Tyrosine phosphorylated. Also phosphorylated by PKA. In terms of tissue distribution, expressed in brain, colon, heart, kidney, liver, lung, megakaryocyte, ovary, pancreas, peripheral blood lymphocytes, placenta, prostate, skeletal muscle, small intestine, spleen, testis, thymus and trachea.

Its subcellular location is the cytoplasm. It localises to the cytoskeleton. The protein localises to the cell cortex. The protein resides in the lysosome. It is found in the golgi apparatus. Its subcellular location is the cell membrane. It localises to the cell projection. The protein localises to the phagocytic cup. The protein resides in the perinuclear region. Functionally, required for translocation of GLUT4 to the plasma membrane in response to insulin signaling. Required to coordinate membrane tubulation with reorganization of the actin cytoskeleton during endocytosis. Binds to lipids such as phosphatidylinositol 4,5-bisphosphate and phosphatidylserine and promotes membrane invagination and the formation of tubules. Also promotes CDC42-induced actin polymerization by recruiting WASL/N-WASP which in turn activates the Arp2/3 complex. Actin polymerization may promote the fission of membrane tubules to form endocytic vesicles. Required for the formation of podosomes, actin-rich adhesion structures specific to monocyte-derived cells. May be required for the lysosomal retention of FASLG/FASL. The chain is Cdc42-interacting protein 4 (TRIP10) from Homo sapiens (Human).